A 915-amino-acid polypeptide reads, in one-letter code: Mitogen-activated protein kinase kinae kinase MST11 (915 aa).

Disordered regions lie at residues 1–65, 134–171, and 183–249; these read MAML…PKHW, KKRN…NPSV, and GMAY…TRTD. Residues 26–45 show a composition bias toward low complexity; the sequence is AQASYPPSRRAPAVPPASQS. An SAM domain is found at 65 to 128; it reads WDEDKVCEYL…FLSIKKLRTK (64 aa). Composition is skewed to low complexity over residues 152–163 and 188–203; these read SESPSKPFHSSS and PSRP…PLPS. The 91-residue stretch at 263-353 folds into the Ras-associating domain; the sequence is NQDVIRVIST…NRLILRRVPA (91 aa). Positions 641–911 constitute a Protein kinase domain; it reads WMKGALIGQG…ADDLMLSPFL (271 aa). ATP contacts are provided by residues 647 to 655 and Lys-670; that span reads IGQGSFGCV.

Belongs to the protein kinase superfamily. STE Ser/Thr protein kinase family. MAP kinase kinase kinase subfamily. Interacts with the adapter protein MST50.

The enzyme catalyses L-seryl-[protein] + ATP = O-phospho-L-seryl-[protein] + ADP + H(+). It carries out the reaction L-threonyl-[protein] + ATP = O-phospho-L-threonyl-[protein] + ADP + H(+). Mitogen-activated protein kinase kinase kinase; part of the MST11-MST7-PMK1 MAP kinase (MAPK) cascade that is essential for appressorium formation, penetration and invasive growth. The MST11-MST7-PMK1 MAP kinase cascade transduces signals from the cell surface sensors MDB2 and SHO1 that recognize various surface signals such as surface hydrophobicity, cutin monomers, and rice leaf waxes. MST11 acts as the upstream MAPKKK that directly phosphorylates MAPKK MST7. MST11 but not MST7 may also be involved in the OSM1 MAPK pathway in response to osmotic stresses. The chain is Mitogen-activated protein kinase kinae kinase MST11 from Pyricularia oryzae (strain 70-15 / ATCC MYA-4617 / FGSC 8958) (Rice blast fungus).